A 266-amino-acid polypeptide reads, in one-letter code: Undecaprenyl-diphosphatase (266 aa).

8 helical membrane passes run 1–21, 39–59, 87–107, 111–131, 143–163, 186–206, 217–237, and 243–263; these read MTWL…FLPI, QGLA…MVYF, WAVI…DSWI, LRSA…LGMA, FTLK…IPGT, FSFL…GLEL, EIAG…HLFL, and IGFM…LVWL.

It belongs to the UppP family.

The protein resides in the cell inner membrane. It catalyses the reaction di-trans,octa-cis-undecaprenyl diphosphate + H2O = di-trans,octa-cis-undecaprenyl phosphate + phosphate + H(+). In terms of biological role, catalyzes the dephosphorylation of undecaprenyl diphosphate (UPP). Confers resistance to bacitracin. This chain is Undecaprenyl-diphosphatase, found in Hahella chejuensis (strain KCTC 2396).